The sequence spans 256 residues: Thiazole synthase (256 aa).

K102 functions as the Schiff-base intermediate with DXP in the catalytic mechanism. 1-deoxy-D-xylulose 5-phosphate-binding positions include G163, 189–190 (AG), and 211–212 (AT).

This sequence belongs to the ThiG family. In terms of assembly, homotetramer. Forms heterodimers with either ThiH or ThiS.

It is found in the cytoplasm. The enzyme catalyses [ThiS sulfur-carrier protein]-C-terminal-Gly-aminoethanethioate + 2-iminoacetate + 1-deoxy-D-xylulose 5-phosphate = [ThiS sulfur-carrier protein]-C-terminal Gly-Gly + 2-[(2R,5Z)-2-carboxy-4-methylthiazol-5(2H)-ylidene]ethyl phosphate + 2 H2O + H(+). Its pathway is cofactor biosynthesis; thiamine diphosphate biosynthesis. Its function is as follows. Catalyzes the rearrangement of 1-deoxy-D-xylulose 5-phosphate (DXP) to produce the thiazole phosphate moiety of thiamine. Sulfur is provided by the thiocarboxylate moiety of the carrier protein ThiS. In vitro, sulfur can be provided by H(2)S. The protein is Thiazole synthase of Nocardia farcinica (strain IFM 10152).